The sequence spans 167 residues: Peptide deformylase (167 aa).

Residues C90 and H132 each coordinate Fe cation. E133 is a catalytic residue. H136 is a binding site for Fe cation.

This sequence belongs to the polypeptide deformylase family. The cofactor is Fe(2+).

The enzyme catalyses N-terminal N-formyl-L-methionyl-[peptide] + H2O = N-terminal L-methionyl-[peptide] + formate. Its function is as follows. Removes the formyl group from the N-terminal Met of newly synthesized proteins. Requires at least a dipeptide for an efficient rate of reaction. N-terminal L-methionine is a prerequisite for activity but the enzyme has broad specificity at other positions. The chain is Peptide deformylase from Dehalococcoides mccartyi (strain ATCC BAA-2100 / JCM 16839 / KCTC 5957 / BAV1).